A 69-amino-acid polypeptide reads, in one-letter code: MELDARMDDLECRQAFQDDTLQALNDVVVEQQRSIERLQLQVAALIKRLEDVQGLVGEAGEDEAPPPHY.

It belongs to the SlyX family.

The sequence is that of Protein SlyX homolog from Pseudomonas aeruginosa (strain LESB58).